The sequence spans 919 residues: MDYKDTINLPKTSFKMKANLKEKEPQILQKWEDINIAYYLRNIRIGGTKFVLHDGPPYANGDIHMGTALNKVLKDIVLKYKTLRGYDAPYVPGWDTHGLPIEHNVTTKLGEKANALSKLEIRKLCEDYAMKYVDIQRESFKRLGVIGFWDKPYLTLKPEYEAKVLEILRSIVESGNIYRGTKPIYWCTECQTALAEAEVEYHDHTSDSIYVKFPLVGENNTYVIIWTTTPWTLPANVAIAVHPNFDYAKVEIGNEYWIMAKELVDKTLKEAGIDDYKIIDTFKGLTLEGEKARHPFVDRESLLVLADYVTLDEGTGCVHTAPGHGMEDYITGTKYNLQVISPVDSQGYFTDEAGKYKGMKIWEANKEIIKDLKENGFLVQSGKITHSYPHCWRCKNPVIFRATPQWFIDLEKNNYREKVLEEIKKVNWIPKWGENRISSMVRERPDWVISRQRAWGIPIPAIKCENCGETILDTKIIDHVIEIIEKEGSNAWFEKEAKELLPNDYRCPKCGGSEFKKEEDILDVWIDSGSSFEAVANSREELKKFPVDLYLEGSDQHRGWFQSSIFLSVAKHGIAPYESVLTHGFIKDEEGKKMSKSLGNVVNPKDIINKYGADILRLWVASADYRMDIKISYNILEQQVETYRKLRNTIRFLLGNINDFDPDEDSVAYEEMLEIDQWALMKLHNLIKNVTKAYDNYEFYKVHYLINNFCTIDMSSTYLDIIKDRIYVEGKKSKLRRSAQTVLYETAIALNKMISPILPFTAEEVYEHLNYSNKYETIFAELWPEYKENYLSEELEEKWNKIFALREDVLKALEEKRKEKFLGNSLDAKIILNLKDDTLKQILSQYDNNWIADLFIVSQFEFGNVDEGFEGRYATIKVTKAEGEKCERCWKVDPNTDNDPDFPGVCPRCARVLKEEINA.

Positions 57 to 67 match the 'HIGH' region motif; the sequence is PYANGDIHMGT. E552 lines the L-isoleucyl-5'-AMP pocket. The 'KMSKS' region motif lies at 593–597; that stretch reads KMSKS. K596 is an ATP binding site. Zn(2+) contacts are provided by C886, C889, C906, and C909.

The protein belongs to the class-I aminoacyl-tRNA synthetase family. IleS type 1 subfamily. In terms of assembly, monomer. Zn(2+) is required as a cofactor.

It is found in the cytoplasm. It catalyses the reaction tRNA(Ile) + L-isoleucine + ATP = L-isoleucyl-tRNA(Ile) + AMP + diphosphate. Its function is as follows. Catalyzes the attachment of isoleucine to tRNA(Ile). As IleRS can inadvertently accommodate and process structurally similar amino acids such as valine, to avoid such errors it has two additional distinct tRNA(Ile)-dependent editing activities. One activity is designated as 'pretransfer' editing and involves the hydrolysis of activated Val-AMP. The other activity is designated 'posttransfer' editing and involves deacylation of mischarged Val-tRNA(Ile). The protein is Isoleucine--tRNA ligase of Petrotoga mobilis (strain DSM 10674 / SJ95).